Reading from the N-terminus, the 273-residue chain is Dermonecrotic toxin LdSicTox-alphaIB1aii (273 aa).

H5 is a catalytic residue. Residues E25 and D27 each coordinate Mg(2+). Catalysis depends on H41, which acts as the Nucleophile. Disulfide bonds link C45–C51 and C47–C190. D85 serves as a coordination point for Mg(2+). N-linked (GlcNAc...) asparagine glycosylation is present at N250.

Belongs to the arthropod phospholipase D family. Class II subfamily. Mg(2+) serves as cofactor. As to expression, expressed by the venom gland.

Its subcellular location is the secreted. The enzyme catalyses an N-(acyl)-sphingosylphosphocholine = an N-(acyl)-sphingosyl-1,3-cyclic phosphate + choline. The catalysed reaction is an N-(acyl)-sphingosylphosphoethanolamine = an N-(acyl)-sphingosyl-1,3-cyclic phosphate + ethanolamine. It carries out the reaction a 1-acyl-sn-glycero-3-phosphocholine = a 1-acyl-sn-glycero-2,3-cyclic phosphate + choline. It catalyses the reaction a 1-acyl-sn-glycero-3-phosphoethanolamine = a 1-acyl-sn-glycero-2,3-cyclic phosphate + ethanolamine. Its function is as follows. Dermonecrotic toxins cleave the phosphodiester linkage between the phosphate and headgroup of certain phospholipids (sphingolipid and lysolipid substrates), forming an alcohol (often choline) and a cyclic phosphate. This toxin acts on sphingomyelin (SM). It may also act on ceramide phosphoethanolamine (CPE), lysophosphatidylcholine (LPC) and lysophosphatidylethanolamine (LPE), but not on lysophosphatidylserine (LPS), and lysophosphatidylglycerol (LPG). It acts by transphosphatidylation, releasing exclusively cyclic phosphate products as second products. Induces dermonecrosis, hemolysis, increased vascular permeability, edema, inflammatory response, and platelet aggregation. This is Dermonecrotic toxin LdSicTox-alphaIB1aii from Loxosceles deserta (Desert recluse spider).